The primary structure comprises 371 residues: tRNA (guanine(26)-N(2))-dimethyltransferase (371 aa).

A Trm1 methyltransferase domain is found at 1–370 (MDVSEGGVTV…GGLAEVEAAV (370 aa)). Residues Arg-36, Arg-66, Asp-81, Asp-107, and Ala-108 each contribute to the S-adenosyl-L-methionine site. Zn(2+) is bound by residues Cys-238, Cys-241, Cys-258, and Cys-261.

Belongs to the class I-like SAM-binding methyltransferase superfamily. Trm1 family.

The catalysed reaction is guanosine(26) in tRNA + 2 S-adenosyl-L-methionine = N(2)-dimethylguanosine(26) in tRNA + 2 S-adenosyl-L-homocysteine + 2 H(+). Its function is as follows. Dimethylates a single guanine residue at position 26 of a number of tRNAs using S-adenosyl-L-methionine as donor of the methyl groups. The chain is tRNA (guanine(26)-N(2))-dimethyltransferase from Halobacterium salinarum (strain ATCC 700922 / JCM 11081 / NRC-1) (Halobacterium halobium).